The primary structure comprises 48 residues: Large ribosomal subunit protein bL34c (48 aa).

A disordered region spans residues 18 to 48 (SGFRSRMATPQGRKTIRNRRKKGRKNLTLRR). Positions 31–48 (KTIRNRRKKGRKNLTLRR) are enriched in basic residues.

This sequence belongs to the bacterial ribosomal protein bL34 family.

Its subcellular location is the plastid. The protein resides in the chloroplast. This Phaeodactylum tricornutum (strain CCAP 1055/1) protein is Large ribosomal subunit protein bL34c.